We begin with the raw amino-acid sequence, 837 residues long: MSLSHLYRDGEGRIDDDDDERENFEITDWDLQNEFNPNRQRHWQTKEEATYGVWAERDSDDERPSFGGKRARDYSAPVNFISAGLKKGAAEEAELEDSDDEEKPVKQDDFPKDFGPRKLKTGGNFKPSQKGFAGGTKSFMDFGSWERHTKGIGQKLLQKMGYVPGRGLGKNAQGIINPIEAKQRKGKGAVGAYGSERTTQSMQDFPVVDSEEEAEEEFQKELSQWRKDPSGSKKKPKYSYKTVEELKAKGRISKKLTAPQKELSQVKVIDMTGREQKVYYSYSQISHKHNVPDDGLPLQSQQLPQSGKEAKAPGFALSELEHNLQLLIDLTEQEIIQNDRQLQYERDMVVNLFHELEKMTEVLDHEERVIFNLSKVLEMVEECERRMQPNCSNPLTLDECARIFETLQDKYYEEYRMSDRVDLAVAIVYPLMKEYFKEWDPLKDCTYGTEIISKWKSLLENDQLLSHGGQDLSADAFHRLIWEVWMPFVRNIVTQWQPRNCDPMVDFLDSWVHIIPVWILDNILDQLIFPKLQKEVENWNPLTDTVPIHSWIHPWLPLMQARLEPLYSPIRSKLSSALQKWHPSDSSAKLILQPWKDVFTPGSWEAFMVKNIVPKLGMCLGELVINPHQQHMDAFYWVIDWEGMISVSSLVGLLEKHFFPKWLQVLCSWLSNSPNYEEITKWYLGWKSMFSDQVLAHPSVKDKFNEALDIMNRAVSSNVGAYMQPGARENIAYLTHTERRKDFQYEAMQERREAENMAQRGIGVAASSVPMNFKDLIETKAEEHNIVFMPVIGKRHEGKQLYTFGRIVIYIDRGVVFVQGEKTWVPTSLQSLIDMAK.

2 stretches are compositionally biased toward basic and acidic residues: residues 1–13 and 53–64; these read MSLS…GEGR and VWAERDSDDERP. Disordered stretches follow at residues 1–21, 53–72, and 85–133; these read MSLS…DDER, VWAE…KRAR, and LKKG…KGFA. Residues 1-50 are required for interaction with DHX15; it reads MSLSHLYRDGEGRIDDDDDERENFEITDWDLQNEFNPNRQRHWQTKEEAT. Phosphoserine occurs at positions 2, 59, and 98. The segment covering 91–102 has biased composition (acidic residues); the sequence is EEAELEDSDDEE. Over residues 103–116 the composition is skewed to basic and acidic residues; sequence KPVKQDDFPKDFGP. The residue at position 144 (Ser144) is a Phosphoserine. The 47-residue stretch at 149-195 folds into the G-patch domain; sequence TKGIGQKLLQKMGYVPGRGLGKNAQGIINPIEAKQRKGKGAVGAYGS. The tract at residues 179–236 is disordered; sequence IEAKQRKGKGAVGAYGSERTTQSMQDFPVVDSEEEAEEEFQKELSQWRKDPSGSKKKP. Ser210 is modified (phosphoserine). The segment covering 217–231 has biased composition (basic and acidic residues); it reads EFQKELSQWRKDPSG. The Nuclear localization signal motif lies at 700 to 705; it reads VKDKFN. Residues 710–734 form a required for nuclear speckle localization region; it reads IMNRAVSSNVGAYMQPGARENIAYL.

This sequence belongs to the TFP11/STIP family. As to quaternary structure, identified in the spliceosome C complex. Found in the Intron Large (IL) complex, a post-mRNA release spliceosomal complex containing the excised intron, U2, U5 and U6 snRNPs, and splicing factors. Interacts with TUFT1. Interacts with DHX15; indicative for a recruitment of DHX15 to the IL complex. Interacts with GCFC2.

Its subcellular location is the cytoplasm. The protein resides in the nucleus. In terms of biological role, involved in pre-mRNA splicing, specifically in spliceosome disassembly during late-stage splicing events. Intron turnover seems to proceed through reactions in two lariat-intron associated complexes termed Intron Large (IL) and Intron Small (IS). In cooperation with DHX15 seems to mediate the transition of the U2, U5 and U6 snRNP-containing IL complex to the snRNP-free IS complex leading to efficient debranching and turnover of excised introns. May play a role in the differentiation of ameloblasts and odontoblasts or in the forming of the enamel extracellular matrix. The sequence is that of Tuftelin-interacting protein 11 (TFIP11) from Pongo abelii (Sumatran orangutan).